The following is a 242-amino-acid chain: MAPYRLDVVTLAPQAFAPMGELGVIGRAFHAGRAELVLHNPRDHASDRYRKVDDEPYGGGAGMVLKPEPVFAAFDAIPVCGRRRVLLMTPQGHPLQQADLQRWATDHDQLVLLCGHYEGFDERIRTLADEEVSLGDFVLTGGELPAMTIINGVVRLLPGTVGSAESLVEESHSDGLLEHPHYTRPAEFRGMGVPEVLRSGDHGAIARWRQEQREQRTAARRPDLMQRWQQRFGADNDSEHRA.

S-adenosyl-L-methionine is bound by residues Gly115 and 134 to 139 (LGDFVL). Over residues 210–224 (QEQREQRTAARRPDL) the composition is skewed to basic and acidic residues. Residues 210 to 242 (QEQREQRTAARRPDLMQRWQQRFGADNDSEHRA) form a disordered region.

It belongs to the RNA methyltransferase TrmD family. In terms of assembly, homodimer.

It is found in the cytoplasm. It carries out the reaction guanosine(37) in tRNA + S-adenosyl-L-methionine = N(1)-methylguanosine(37) in tRNA + S-adenosyl-L-homocysteine + H(+). Its function is as follows. Specifically methylates guanosine-37 in various tRNAs. The polypeptide is tRNA (guanine-N(1)-)-methyltransferase (Synechococcus sp. (strain WH7803)).